We begin with the raw amino-acid sequence, 337 residues long: Lipoyl synthase (337 aa).

Residues Cys81, Cys86, Cys92, Cys107, Cys111, Cys114, and Ser323 each contribute to the [4Fe-4S] cluster site. Residues 93–312 (FSHGTATFMI…EDYGNALGFS (220 aa)) form the Radical SAM core domain.

This sequence belongs to the radical SAM superfamily. Lipoyl synthase family. [4Fe-4S] cluster is required as a cofactor.

The protein localises to the cytoplasm. It catalyses the reaction [[Fe-S] cluster scaffold protein carrying a second [4Fe-4S](2+) cluster] + N(6)-octanoyl-L-lysyl-[protein] + 2 oxidized [2Fe-2S]-[ferredoxin] + 2 S-adenosyl-L-methionine + 4 H(+) = [[Fe-S] cluster scaffold protein] + N(6)-[(R)-dihydrolipoyl]-L-lysyl-[protein] + 4 Fe(3+) + 2 hydrogen sulfide + 2 5'-deoxyadenosine + 2 L-methionine + 2 reduced [2Fe-2S]-[ferredoxin]. Its pathway is protein modification; protein lipoylation via endogenous pathway; protein N(6)-(lipoyl)lysine from octanoyl-[acyl-carrier-protein]: step 2/2. Functionally, catalyzes the radical-mediated insertion of two sulfur atoms into the C-6 and C-8 positions of the octanoyl moiety bound to the lipoyl domains of lipoate-dependent enzymes, thereby converting the octanoylated domains into lipoylated derivatives. The polypeptide is Lipoyl synthase (Xanthomonas axonopodis pv. citri (strain 306)).